Here is a 205-residue protein sequence, read N- to C-terminus: ATP synthase subunit b (205 aa).

The helical transmembrane segment at 45 to 65 (LGMTATAWVSLAMVIVILLLL) threads the bilayer.

It belongs to the ATPase B chain family. As to quaternary structure, F-type ATPases have 2 components, F(1) - the catalytic core - and F(0) - the membrane proton channel. F(1) has five subunits: alpha(3), beta(3), gamma(1), delta(1), epsilon(1). F(0) has three main subunits: a(1), b(2) and c(10-14). The alpha and beta chains form an alternating ring which encloses part of the gamma chain. F(1) is attached to F(0) by a central stalk formed by the gamma and epsilon chains, while a peripheral stalk is formed by the delta and b chains.

It is found in the cell inner membrane. Functionally, f(1)F(0) ATP synthase produces ATP from ADP in the presence of a proton or sodium gradient. F-type ATPases consist of two structural domains, F(1) containing the extramembraneous catalytic core and F(0) containing the membrane proton channel, linked together by a central stalk and a peripheral stalk. During catalysis, ATP synthesis in the catalytic domain of F(1) is coupled via a rotary mechanism of the central stalk subunits to proton translocation. Its function is as follows. Component of the F(0) channel, it forms part of the peripheral stalk, linking F(1) to F(0). The chain is ATP synthase subunit b from Rhizorhabdus wittichii (strain DSM 6014 / CCUG 31198 / JCM 15750 / NBRC 105917 / EY 4224 / RW1) (Sphingomonas wittichii).